The primary structure comprises 67 residues: Alpha-conotoxin-like Qc1.1b (67 aa).

The N-terminal stretch at 1–21 is a signal peptide; sequence MGMRMMFTMFLLVVLAITVVS. Residues 22-46 constitute a propeptide that is removed on maturation; that stretch reads FTSDHASDGRNTAANDKASKLMALR. 2 disulfides stabilise this stretch: Cys49/Cys55 and Cys50/Cys63. The tract at residues 51 to 53 is lacks the Ser-Xaa-Pro motif that is crucial for potent interaction with nAChR; it reads DNP.

This sequence belongs to the conotoxin A superfamily. In terms of tissue distribution, expressed by the venom duct.

The protein resides in the secreted. Functionally, alpha-conotoxins act on postsynaptic membranes, they bind to the nicotinic acetylcholine receptors (nAChR) and thus inhibit them. Has possibly a distinct nAChR binding mode from other alpha-conotoxins, due to a different three residue motif (lacks the Ser-Xaa-Pro motif). The chain is Alpha-conotoxin-like Qc1.1b from Conus quercinus (Oak cone).